The primary structure comprises 132 residues: Protein FasE (132 aa).

This chain is Protein FasE (fasE), found in Escherichia coli.